The chain runs to 69 residues: MMPGPFELIIILVIVLLLFGGKRLKDIGGDLGNAIKGFKKAMKESTDSINNKDDIVEAKIIKKEIKQEK.

A helical membrane pass occupies residues 1–21 (MMPGPFELIIILVIVLLLFGG).

Belongs to the TatA/E family. The Tat system comprises two distinct complexes: a TatABC complex, containing multiple copies of TatA, TatB and TatC subunits, and a separate TatA complex, containing only TatA subunits. Substrates initially bind to the TatABC complex, which probably triggers association of the separate TatA complex to form the active translocon.

It is found in the cell inner membrane. In terms of biological role, part of the twin-arginine translocation (Tat) system that transports large folded proteins containing a characteristic twin-arginine motif in their signal peptide across membranes. TatA could form the protein-conducting channel of the Tat system. This is Sec-independent protein translocase protein TatA from Vesicomyosocius okutanii subsp. Calyptogena okutanii (strain HA).